The following is a 101-amino-acid chain: uncharacterized protein (101 aa).

The protein resides in the plastid. The protein localises to the chloroplast. This is an uncharacterized protein from Chlamydomonas reinhardtii (Chlamydomonas smithii).